We begin with the raw amino-acid sequence, 132 residues long: Large ribosomal subunit protein uL14 (132 aa).

Belongs to the universal ribosomal protein uL14 family. As to quaternary structure, part of the 50S ribosomal subunit. Forms a cluster with proteins L3 and L24e, part of which may contact the 16S rRNA in 2 intersubunit bridges.

Functionally, binds to 23S rRNA. Forms part of two intersubunit bridges in the 70S ribosome. The sequence is that of Large ribosomal subunit protein uL14 from Methanocella arvoryzae (strain DSM 22066 / NBRC 105507 / MRE50).